We begin with the raw amino-acid sequence, 729 residues long: DNA topoisomerase 3 (729 aa).

The region spanning 3–136 (KSVVIAEKPS…IKRLWISSVT (134 aa)) is the Toprim domain. E9 and D105 together coordinate Mg(2+). The Topo IA-type catalytic domain occupies 153–594 (YDNLYASAVA…EMKNYTKEIV (442 aa)). The interaction with DNA stretch occupies residues 187-192 (NCGRVQ). Y310 acts as the O-(5'-phospho-DNA)-tyrosine intermediate in catalysis. Basic and acidic residues predominate over residues 686-713 (ERRKKESGNKADKRDVQKYMKQQKKEEE). The disordered stretch occupies residues 686-718 (ERRKKESGNKADKRDVQKYMKQQKKEEEPLNNP).

Belongs to the type IA topoisomerase family. It depends on Mg(2+) as a cofactor.

The catalysed reaction is ATP-independent breakage of single-stranded DNA, followed by passage and rejoining.. Functionally, releases the supercoiling and torsional tension of DNA, which is introduced during the DNA replication and transcription, by transiently cleaving and rejoining one strand of the DNA duplex. Introduces a single-strand break via transesterification at a target site in duplex DNA. The scissile phosphodiester is attacked by the catalytic tyrosine of the enzyme, resulting in the formation of a DNA-(5'-phosphotyrosyl)-enzyme intermediate and the expulsion of a 3'-OH DNA strand. The free DNA strand then undergoes passage around the unbroken strand, thus removing DNA supercoils. Finally, in the religation step, the DNA 3'-OH attacks the covalent intermediate to expel the active-site tyrosine and restore the DNA phosphodiester backbone. This Bacillus cereus (strain ZK / E33L) protein is DNA topoisomerase 3.